The primary structure comprises 371 residues: Putative 26S proteasome regulatory subunit homolog MJ1494 (371 aa).

Position 161-168 (161-168) interacts with ATP; the sequence is GPPGTGKT.

The protein belongs to the AAA ATPase family.

Functionally, the 26S proteasome is involved in the ATP-dependent degradation of ubiquitinated proteins. The regulatory (or ATPase) complex confers ATP dependency and substrate specificity to the 26S complex. The sequence is that of Putative 26S proteasome regulatory subunit homolog MJ1494 from Methanocaldococcus jannaschii (strain ATCC 43067 / DSM 2661 / JAL-1 / JCM 10045 / NBRC 100440) (Methanococcus jannaschii).